We begin with the raw amino-acid sequence, 189 residues long: Movement protein (189 aa).

The protein belongs to the tombusvirus/aureusvirus movement protein p22 family. As to quaternary structure, interacts with host protein HFI22. In terms of processing, phosphorylated.

Its subcellular location is the host membrane. In terms of biological role, transports viral genome to neighboring plant cells directly through plasmosdesmata, without any budding. The movement protein allows efficient cell to cell propagation, by bypassing the host cell wall barrier. The chain is Movement protein from Capsicum annuum (Capsicum pepper).